A 706-amino-acid polypeptide reads, in one-letter code: MLELITDFSKKSFKNYSMKEELKFNAINIIYGVNGRGKTSLARGIKEIIEENNPDSLRYFYTDYIHELLLLEDSNKFKGVKATFGTKNVEIENKIIKLKNEVVDMTDTKKLLVEKRRKLRELINEIHKSRKGNLKIPLKSSNKSIEEVIAIYEKNLKDAKKIEHNIESIRNFVANDETLYNKYNSIYEVMIPSLKIETYDVDRLTKILQNNYTDIKIPSFEVIDWLRNGLELHNVEESICKFCGNNLNYNLIKEKIEIYLLNEKKKDFDYLKDVEKSIEQLSDNYEQYLSNIDIFVNELGVQKSVEESLGDSIDEIKRILKQKLGNMENDNLKFPSDDYITLISRLSEIEEECKEKKKIKLKELNKKTENINVIVTGSISLEILENQSIREELSSIQYEENECKKQEQLNEEINAKISKLHENQSDYNDFKIYLNGVFESINLHIRLKSDETTQNYYLYHDLENISLNIKDISEGEKNLIAFLFFYFELFEDEKQETIKSNIKTLIIDDPINSFDEANRFYVLELIKKVLKSKFNQIFIFTHSWNDFCDITYRLKGEDHNFYEVYKDHQGTSFLEKFKKVKTPYKKLFQEIYELSRKSQKDIVEEDCYYYHSINSIRRVFEEFLSFKLKNSDLAQKSNQPEIEEVYRKMTGNEMSNNKKIKLGSFLTIINVLSHKPYRAIDVIGSAKFLMRYIEDVDKAHYDAMKD.

3 coiled-coil regions span residues 86–162 (TKNV…AKKI), 269–299 (DYLK…VNEL), and 337–427 (DDYI…QSDY).

This is an uncharacterized protein from Staphylococcus aureus (strain MRSA252).